A 146-amino-acid polypeptide reads, in one-letter code: Ribonuclease H (146 aa).

The RNase H type-1 domain occupies 1–142 (MNKIIIYTDG…ADALANLAMD (142 aa)). Residues Asp-9, Glu-47, Asp-70, and Asp-134 each coordinate Mg(2+).

This sequence belongs to the RNase H family. Monomer. It depends on Mg(2+) as a cofactor.

It localises to the cytoplasm. It carries out the reaction Endonucleolytic cleavage to 5'-phosphomonoester.. Functionally, endonuclease that specifically degrades the RNA of RNA-DNA hybrids. The sequence is that of Ribonuclease H from Ruthia magnifica subsp. Calyptogena magnifica.